The sequence spans 81 residues: Apolipoprotein C-I, acidic form (81 aa).

An N-terminal signal peptide occupies residues 1–24; it reads MRLFLSLLVVVLSIVLEGPTPAQG.

This sequence belongs to the apolipoprotein C1 family.

The protein resides in the secreted. This Cercocebus atys (Sooty mangabey) protein is Apolipoprotein C-I, acidic form (APOC1A).